The chain runs to 310 residues: Calcium homeostasis modulator protein 5 (310 aa).

4 helical membrane passes run 17–37, 49–69, 101–121, and 181–201; these read TIGYSVMAILTIGSERIFSMV, FPYGICFLLGPAVVLLVVGFF, LIKVLYGACVAPVMWLTVALL, and QILGWSVIITAVVIALIGTCY.

Belongs to the CALHM family.

Its subcellular location is the membrane. In terms of biological role, pore-forming subunit of a voltage-gated ion channel. The protein is Calcium homeostasis modulator protein 5 (calhm5.1) of Danio rerio (Zebrafish).